The chain runs to 479 residues: 5-hydroxytryptamine receptor 2B (479 aa).

Topologically, residues M1–W55 are extracellular. N-linked (GlcNAc...) asparagine glycosylation is present at N29. The chain crosses the membrane as a helical span at residues A56–V78. Residues A79–N89 are Cytoplasmic-facing. Residues Y90–L112 traverse the membrane as a helical segment. At T113–P128 the chain is on the extracellular side. A disulfide bridge links C127 with C206. A helical transmembrane segment spans residues A129–L150. Ergotamine-binding residues include D134 and T139. The DRY motif; important for ligand-induced conformation changes motif lies at D151 to Y153. The Cytoplasmic segment spans residues D151–T170. A helical transmembrane segment spans residues A171–I191. The Extracellular portion of the chain corresponds to K192 to S215. L208 provides a ligand contact to ergotamine. A [DE]RFG motif; may stabilize a conformation that preferentially activates signaling via beta-arrestin family members motif is present at residues D211–G214. A helical transmembrane segment spans residues F216–L238. Topologically, residues T239–K323 are cytoplasmic. A helical transmembrane segment spans residues A324–L344. The Extracellular segment spans residues T345–T359. C349 and C352 are oxidised to a cystine. Residues L360–L381 traverse the membrane as a helical segment. An NPxxY motif; important for ligand-induced conformation changes and signaling motif is present at residues N375–Y379. Topologically, residues F382–I479 are cytoplasmic. C396 carries S-palmitoyl cysteine lipidation. The PDZ-binding signature appears at S477–I479.

It belongs to the G-protein coupled receptor 1 family. As to quaternary structure, interacts (via C-terminus) with MPDZ. As to expression, ubiquitous. Detected in intestine, heart, skeletal muscle, testis, urinary bladder, stomach, liver, lung, brain and kidney. Detected in osteoblasts. Detected in the raphe nucleus in the brain, in dorsal root ganglion neurons, the brain stem, cerebellum and spinal cord. Detected in interstitial cells of Cajal in the small intestine.

Its subcellular location is the cell membrane. The protein resides in the synapse. The protein localises to the synaptosome. In terms of biological role, G-protein coupled receptor for 5-hydroxytryptamine (serotonin). Also functions as a receptor for various ergot alkaloid derivatives and psychoactive substances. Ligand binding causes a conformation change that triggers signaling via guanine nucleotide-binding proteins (G proteins) and modulates the activity of downstream effectors. HTR2B is coupled to G(q)/G(11) G alpha proteins and activates phospholipase C-beta, releasing diacylglycerol (DAG) and inositol 1,4,5-trisphosphate (IP3) second messengers that modulate the activity of phosphatidylinositol 3-kinase and promote the release of Ca(2+) ions from intracellular stores, respectively. Beta-arrestin family members inhibit signaling via G proteins and mediate activation of alternative signaling pathways. Plays a role in the regulation of dopamine and 5-hydroxytryptamine release, 5-hydroxytryptamine uptake and in the regulation of extracellular dopamine and 5-hydroxytryptamine levels, and thereby affects neural activity. May play a role in the perception of pain. Plays a role in the regulation of behavior, including impulsive behavior. Required for normal proliferation of embryonic cardiac myocytes and normal heart development. Protects cardiomyocytes against apoptosis. Plays a role in the adaptation of pulmonary arteries to chronic hypoxia. Plays a role in vasoconstriction. Required for normal osteoblast function and proliferation, and for maintaining normal bone density. Required for normal proliferation of the interstitial cells of Cajal in the intestine. The polypeptide is 5-hydroxytryptamine receptor 2B (Htr2b) (Mus musculus (Mouse)).